The following is a 356-amino-acid chain: Guanine nucleotide-binding protein alpha-2 subunit (356 aa).

The segment at 1 to 25 (MGLCQSEEEKVGSQKSRAIDKEIKQ) is disordered. Residue Gly-2 is the site of N-myristoyl glycine attachment. Cys-4 carries the S-palmitoyl cysteine lipid modification. Basic and acidic residues predominate over residues 7 to 25 (EEEKVGSQKSRAIDKEIKQ). One can recognise a G-alpha domain in the interval 14 to 338 (QKSRAIDKEI…TDTNQVQKIL (325 aa)). Residues 17 to 30 (RAIDKEIKQNQSND) are G1 motif. Positions 25, 27, 28, 29, 30, 135, 160, 166, 188, 254, 255, 257, and 310 each coordinate GTP. Asn-29 contacts Mg(2+). Residues 158–166 (FFENLDRIA) form a G2 motif region. Position 166 (Ala-166) interacts with Mg(2+). The G3 motif stretch occupies residues 181–190 (RTKTTGIVEV). Positions 250-257 (MRLFESIC) are G4 motif. The segment at 308–313 (QKFEAL) is G5 motif.

This sequence belongs to the G-alpha family. G(q) subfamily. As to quaternary structure, g proteins are composed of 3 units; alpha, beta and gamma. The alpha chain contains the guanine nucleotide binding site. It depends on Mg(2+) as a cofactor.

Guanine nucleotide-binding proteins (G proteins) are involved as modulators or transducers in various transmembrane signaling systems. Involved in behavioral responses to P.aeruginosa by controlling the expression of daf-7, a member of the TGF-beta family, in ASJ sensory neurons. In Caenorhabditis briggsae, this protein is Guanine nucleotide-binding protein alpha-2 subunit (gpa-2).